Here is a 304-residue protein sequence, read N- to C-terminus: Quinolinate synthase (304 aa).

2 residues coordinate iminosuccinate: His24 and Ser41. Residue Cys86 coordinates [4Fe-4S] cluster. Iminosuccinate is bound by residues 112–114 (YVN) and Ser129. Cys171 provides a ligand contact to [4Fe-4S] cluster. Iminosuccinate contacts are provided by residues 197–199 (HPE) and Thr214. Cys259 lines the [4Fe-4S] cluster pocket.

Belongs to the quinolinate synthase family. Type 2 subfamily. [4Fe-4S] cluster is required as a cofactor.

Its subcellular location is the cytoplasm. The catalysed reaction is iminosuccinate + dihydroxyacetone phosphate = quinolinate + phosphate + 2 H2O + H(+). Its pathway is cofactor biosynthesis; NAD(+) biosynthesis; quinolinate from iminoaspartate: step 1/1. Catalyzes the condensation of iminoaspartate with dihydroxyacetone phosphate to form quinolinate. The polypeptide is Quinolinate synthase (Geobacter metallireducens (strain ATCC 53774 / DSM 7210 / GS-15)).